The chain runs to 157 residues: 2-C-methyl-D-erythritol 2,4-cyclodiphosphate synthase (157 aa).

A divalent metal cation contacts are provided by Asp8 and His10. 4-CDP-2-C-methyl-D-erythritol 2-phosphate-binding positions include 8-10 (DVH) and 34-35 (HS). A divalent metal cation is bound at residue His42. 4-CDP-2-C-methyl-D-erythritol 2-phosphate is bound by residues 56-58 (DIG), 61-65 (FPDTD), 132-135 (TTEE), and Phe139.

The protein belongs to the IspF family. In terms of assembly, homotrimer. A divalent metal cation is required as a cofactor.

It carries out the reaction 4-CDP-2-C-methyl-D-erythritol 2-phosphate = 2-C-methyl-D-erythritol 2,4-cyclic diphosphate + CMP. The protein operates within isoprenoid biosynthesis; isopentenyl diphosphate biosynthesis via DXP pathway; isopentenyl diphosphate from 1-deoxy-D-xylulose 5-phosphate: step 4/6. In terms of biological role, involved in the biosynthesis of isopentenyl diphosphate (IPP) and dimethylallyl diphosphate (DMAPP), two major building blocks of isoprenoid compounds. Catalyzes the conversion of 4-diphosphocytidyl-2-C-methyl-D-erythritol 2-phosphate (CDP-ME2P) to 2-C-methyl-D-erythritol 2,4-cyclodiphosphate (ME-CPP) with a corresponding release of cytidine 5-monophosphate (CMP). This chain is 2-C-methyl-D-erythritol 2,4-cyclodiphosphate synthase, found in Clostridium botulinum (strain Eklund 17B / Type B).